The chain runs to 787 residues: Zinc finger protein 227 (787 aa).

The KRAB domain maps to 23-94 (VTFKDVAVVF…ERETQRNGHS (72 aa)). 18 C2H2-type zinc fingers span residues 243-275 (HPCRVCGEGFSHGAVLPVHQVDPGEKCSHLQTH), 312-334 (YRCDSCGKAFGSSTGLIIHYRTH), 340-362 (YRCEACGKCFSQSSNFQCHQRVH), 368-390 (YKCEECGKGFGWSVNLRVHQRVH), 396-418 (YKCEECGKGFTQAAHYHIHQRVH), 424-446 (YKCDVCGKGFSHNSPLICHRRVH), 452-474 (YRCEACGKGFTRNTDLHIHFRVH), 480-502 (YTCKECGKGFSQASNLQVHQNVH), 508-530 (FKCETCGKGFSQSSKLQTHQRVH), 536-558 (YRCDVCGKDFSYSSNLKLHQVIH), 564-586 (YTCEACGKGFSWRSNLHAHQRVH), 592-614 (YKCEACDKSFSQAIDFRVHQRVH), 620-642 (YKCGVCGKGFSQSSGLQSHQRVH), 648-670 (YKCDVCGKGFRYSSQFIYHQRGH), 676-698 (YKCEECGKGFGRSLNLRHHQRVH), 704-726 (HKCEECGKAFSLPSNLRVHLSVH), 732-754 (FKCEDCGKGFSQSSRLQAHQRVH), and 760-782 (YKCNICGKDFSHRSRLTYHQKVH).

It belongs to the krueppel C2H2-type zinc-finger protein family.

It is found in the nucleus. Its function is as follows. May be involved in transcriptional regulation. This is Zinc finger protein 227 (ZNF227) from Bos taurus (Bovine).